A 209-amino-acid polypeptide reads, in one-letter code: Large ribosomal subunit protein uL3 (209 aa).

The segment at 127-166 (NFGGGSRTHGQSDRLRAPGSVGGSSDPSRTFKGTRMAGRM) is disordered.

It belongs to the universal ribosomal protein uL3 family. In terms of assembly, part of the 50S ribosomal subunit. Forms a cluster with proteins L14 and L19.

In terms of biological role, one of the primary rRNA binding proteins, it binds directly near the 3'-end of the 23S rRNA, where it nucleates assembly of the 50S subunit. The chain is Large ribosomal subunit protein uL3 from Chlorobaculum tepidum (strain ATCC 49652 / DSM 12025 / NBRC 103806 / TLS) (Chlorobium tepidum).